The sequence spans 563 residues: MRRMKALTAAMTAALLVSGCSTLPSNTDPQVLRSFNADDQSAEVAGPTPGADPDILLRGFFSAAAFPAQQYQASRAYLTEEANRNWDPTATTVVVDRIDLNTQAGATEDERRIVIRGTQVGTLGSGGVYRPENSELVAEIVMRRVDNEWRIDDLPDGVVLERTEMRNHYTPKNVYFFDPSGQVLVGDRRWIHNAVQSLDTTLMSLLVSGPSQYLAPGVVHQLPSGASFVGFSDGAYQFTGLSSMNEEERLSFATQVVWMLAHAEIPGPYAIFADGSPLVADFPVLSIEDVAEFNPEAYTNAVSTLFSLRDGVVSRVSSGTVTPLTGFLGSGDIDSVAISTSANVAAAVRGNESPRLSVGAPEGSYTDVLTADTITRPTFEYAANALWAVADGDTPVRVTRSSTTRELVQTEVEITLPEGVTGAISEFQLSRTGVRAAMIIEGRVYMGVVTRPSPGERGVTNIVEVAPALRETALSLAWRQDGSLLVGTSMPELPIWRVEIDGSGASALPSGNINAPVVSVASSASTIYATDAHALLQLPASDNTIWREVPGLLGVRSAAVVAY.

Positions 1 to 19 are cleaved as a signal peptide; the sequence is MRRMKALTAAMTAALLVSG. Residue Cys-20 is the site of N-palmitoyl cysteine attachment. Cys-20 is lipidated: S-diacylglycerol cysteine.

The protein belongs to the LpqB lipoprotein family.

Its subcellular location is the cell membrane. The protein is Lipoprotein LpqB of Corynebacterium efficiens (strain DSM 44549 / YS-314 / AJ 12310 / JCM 11189 / NBRC 100395).